The chain runs to 161 residues: Nucleotide-binding protein AZOSEA28950 (161 aa).

It belongs to the YajQ family.

Its function is as follows. Nucleotide-binding protein. The sequence is that of Nucleotide-binding protein AZOSEA28950 from Aromatoleum aromaticum (strain DSM 19018 / LMG 30748 / EbN1) (Azoarcus sp. (strain EbN1)).